The primary structure comprises 432 residues: Serine--tRNA ligase (432 aa).

238-240 (TAE) serves as a coordination point for L-serine. Position 269–271 (269–271 (RSE)) interacts with ATP. Glu292 is an L-serine binding site. 357–360 (EISS) is an ATP binding site. Residue Ser393 coordinates L-serine.

Belongs to the class-II aminoacyl-tRNA synthetase family. Type-1 seryl-tRNA synthetase subfamily. Homodimer. The tRNA molecule binds across the dimer.

Its subcellular location is the cytoplasm. The enzyme catalyses tRNA(Ser) + L-serine + ATP = L-seryl-tRNA(Ser) + AMP + diphosphate + H(+). The catalysed reaction is tRNA(Sec) + L-serine + ATP = L-seryl-tRNA(Sec) + AMP + diphosphate + H(+). Its pathway is aminoacyl-tRNA biosynthesis; selenocysteinyl-tRNA(Sec) biosynthesis; L-seryl-tRNA(Sec) from L-serine and tRNA(Sec): step 1/1. In terms of biological role, catalyzes the attachment of serine to tRNA(Ser). Is also able to aminoacylate tRNA(Sec) with serine, to form the misacylated tRNA L-seryl-tRNA(Sec), which will be further converted into selenocysteinyl-tRNA(Sec). This is Serine--tRNA ligase from Hyphomonas neptunium (strain ATCC 15444).